A 266-amino-acid polypeptide reads, in one-letter code: rRNA adenine N-6-methyltransferase (266 aa).

Residues histidine 14, threonine 16, glycine 41, glutamate 62, aspartate 87, and asparagine 103 each contribute to the S-adenosyl-L-methionine site.

This sequence belongs to the class I-like SAM-binding methyltransferase superfamily. rRNA adenine N(6)-methyltransferase family.

Functionally, involved in erythromycin resistance. The sequence is that of rRNA adenine N-6-methyltransferase (ermFU) from Bacteroides fragilis.